A 255-amino-acid chain; its full sequence is Methanethiol S-methyltransferase (255 aa).

The next 5 membrane-spanning stretches (helical) occupy residues 16–36 (FVLL…VYAV), 56–76 (LVTA…QHSV), 99–119 (YVLF…PIGI), 131–151 (IIFY…TFLI), and 191–211 (VGWF…LVFA).

This sequence belongs to the nurim family.

The protein resides in the membrane. The enzyme catalyses methanethiol + S-adenosyl-L-methionine = dimethyl sulfide + S-adenosyl-L-homocysteine + H(+). In terms of biological role, catalyzes the methylation of methanethiol (MeSH) to yield dimethylsulphide (DMS). In Crocosphaera subtropica (strain ATCC 51142 / BH68) (Cyanothece sp. (strain ATCC 51142)), this protein is Methanethiol S-methyltransferase.